A 277-amino-acid polypeptide reads, in one-letter code: MDNAVDRHVFYISDGTAITAEVLGHAVMSQFPVTISSITLPFVENESRARAVKDQIDAIYHQTGVRPLVFYSIVLPEIRAIILESEGFCQDIVQALVAPLQQEMKLDPTPIAHRTHGLNPNNLNKYDARIAAIDYTLAHDDGISLRNLDQAQVILLGVSRCGKTPTSLYLAMQFGIRAANYPFIADDMDNLVLPASLKPLQHKLFGLTIDPERLAAIREERRENSRYASLRQCRMEVAEVEALYRKNQIPWINSTNYSVEEIATKILDIMGLSRRMY.

Residue 157-164 (GVSRCGKT) participates in ADP binding.

The protein belongs to the pyruvate, phosphate/water dikinase regulatory protein family. PSRP subfamily.

It catalyses the reaction [pyruvate, water dikinase] + ADP = [pyruvate, water dikinase]-phosphate + AMP + H(+). The enzyme catalyses [pyruvate, water dikinase]-phosphate + phosphate + H(+) = [pyruvate, water dikinase] + diphosphate. In terms of biological role, bifunctional serine/threonine kinase and phosphorylase involved in the regulation of the phosphoenolpyruvate synthase (PEPS) by catalyzing its phosphorylation/dephosphorylation. In Escherichia coli O17:K52:H18 (strain UMN026 / ExPEC), this protein is Phosphoenolpyruvate synthase regulatory protein.